A 444-amino-acid polypeptide reads, in one-letter code: Probable galactarate/D-glucarate transporter GarP (444 aa).

The Cytoplasmic segment spans residues 1 to 11; the sequence is MILDTVDEKKK. A helical membrane pass occupies residues 12–32; that stretch reads GVHTRYLILLIIFIVTAVNYA. The Periplasmic portion of the chain corresponds to 33–56; that stretch reads DRATLSIAGTEVAKELQLSAVSMG. The chain crosses the membrane as a helical span at residues 57–77; that stretch reads YIFSAFGWAYLLMQIPGGWLL. The Cytoplasmic segment spans residues 78-89; the sequence is DKFGSKKVYTYS. Helical transmembrane passes span 90–110 and 111–131; these read LFFW…PLAW and AGIS…PSFP. The Cytoplasmic portion of the chain corresponds to 132–157; that stretch reads ANARIVAAWFPTKERGTASAIFNSAQ. 2 helical membrane passes run 158–178 and 179–199; these read YFSL…WGWE and HVFT…IKLI. Residues 200–252 lie on the Cytoplasmic side of the membrane; sequence HNPTDHPRMSAEELKFISENGAVVDMDHKKPGSAAASGPKLHYIKQLLSNRMM. Residues 253–273 traverse the membrane as a helical segment; that stretch reads LGVFFGQYFINTITWFFLTWF. The Periplasmic segment spans residues 274 to 288; it reads PIYLVQEKGMSILKV. A helical membrane pass occupies residues 289 to 309; the sequence is GLVASIPALCGFAGGVLGGVF. Residues 310–319 are Cytoplasmic-facing; sequence SDYLIKRGLS. A helical membrane pass occupies residues 320–340; the sequence is LTLARKLPIVLGMLLASTIIL. The Periplasmic segment spans residues 341 to 350; it reads CNYTNNTTLV. The helical transmembrane segment at 351–371 threads the bilayer; it reads VMLMALAFFGKGFGALGWPVI. The Cytoplasmic segment spans residues 372–385; sequence SDTAPKEIVGLCGG. The helical transmembrane segment at 386 to 406 threads the bilayer; it reads VFNVFGNVASIVTPLVIGYLV. The Periplasmic segment spans residues 407–413; it reads SELHSFN. A helical transmembrane segment spans residues 414–434; the sequence is AALVFVGCSALMAMVCYLFVV. At 435-444 the chain is on the cytoplasmic side; sequence GDIKRMELQK.

This sequence belongs to the major facilitator superfamily. Phthalate permease family.

The protein localises to the cell inner membrane. The enzyme catalyses galactarate(in) + H(+)(in) = galactarate(out) + H(+)(out). The catalysed reaction is D-glucarate(in) + H(+)(in) = D-glucarate(out) + H(+)(out). It carries out the reaction (R)-glycerate(in) + H(+)(in) = (R)-glycerate(out) + H(+)(out). In terms of biological role, probably involved in the uptake of galactarate and/or D-glucarate. May also transport D-glycerate. The polypeptide is Probable galactarate/D-glucarate transporter GarP (Escherichia coli (strain K12)).